The chain runs to 518 residues: MSFSILIAIAIFVGIISYYLWIWSFWIRKGVKGPRGLPFLGVIHKFTNYENPGALKFSEWTKKYGPVYGITEGVEKTLVISDPEFVHEVFVKQFDNFYGRKLTAIQGDPNKNKRVPLVAAQGHRWKRLRTLASPTFSNKSLRKIMGTVEESVTELVRSLEKASAEGKTLDMLEYYQEFTMDIIGKMAMGQEKSLMFRNPMLDKVKTIFKEGRNNVFMISGIFPFVGIALRNIFAKFPSLQMATDIQSILEKALNKRLEQREADEKAGIEPSGEPQDFIDLFLDARSTVDFFEGEAEQDFAKSEVLKVDKHLTFDEIIGQLFVFLLAGYDTTALSLSYSSYLLATHPEIQKKLQEEVDRECPDPEVTFDQLSKLKYLECVVKEALRLYPLASLVHNRKCLKTTNVLGMEIEAGTNINVDTWSLHHDPKVWGDDVNEFKPERWESGDELFFAKGGYLPFGMGPRICIGMRLAMMEMKMLLTNILKNYTFETTPETVIPLKLVGTATIAPSSVLLKLKSRF.

Cys-464 is a binding site for heme.

It belongs to the cytochrome P450 family. The cofactor is heme.

In terms of biological role, cytochromes P450 are a group of heme-thiolate monooxygenases. They oxidize a variety of structurally unrelated compounds, including steroids, fatty acids, and xenobiotics. The protein is Putative cytochrome P450 CYP13A7 (cyp-13A7) of Caenorhabditis elegans.